A 279-amino-acid polypeptide reads, in one-letter code: Putative carbamate hydrolase RutD (279 aa).

In terms of domain architecture, AB hydrolase-1 spans P23 to I126.

This sequence belongs to the AB hydrolase superfamily. Hydrolase RutD family.

It catalyses the reaction carbamate + 2 H(+) = NH4(+) + CO2. Its function is as follows. Involved in pyrimidine catabolism. May facilitate the hydrolysis of carbamate, a reaction that can also occur spontaneously. The protein is Putative carbamate hydrolase RutD of Escherichia coli O17:K52:H18 (strain UMN026 / ExPEC).